An 89-amino-acid polypeptide reads, in one-letter code: Small ribosomal subunit protein uS14 (89 aa).

It belongs to the universal ribosomal protein uS14 family. Part of the 30S ribosomal subunit. Contacts proteins S3 and S10.

Its function is as follows. Binds 16S rRNA, required for the assembly of 30S particles and may also be responsible for determining the conformation of the 16S rRNA at the A site. The sequence is that of Small ribosomal subunit protein uS14 from Chlorobium limicola (strain DSM 245 / NBRC 103803 / 6330).